A 263-amino-acid polypeptide reads, in one-letter code: Chymotrypsinogen 2 (263 aa).

A signal peptide spans 1–18 (MAFLWLLSCFALLGTAFG). Intrachain disulfides connect C19/C140, C60/C76, C154/C219, C186/C200, and C209/C238. The region spanning 34–261 (IVNGEDAVPG…LIPWVQQILQ (228 aa)) is the Peptidase S1 domain. The active-site Charge relay system is the H75. Phosphoserine is present on S93. Catalysis depends on D120, which acts as the Charge relay system. S213 functions as the Charge relay system in the catalytic mechanism.

This sequence belongs to the peptidase S1 family.

It is found in the secreted. The protein localises to the extracellular space. The catalysed reaction is Preferential cleavage: Tyr-|-Xaa, Trp-|-Xaa, Phe-|-Xaa, Leu-|-Xaa.. The sequence is that of Chymotrypsinogen 2 (CTRB1) from Canis lupus familiaris (Dog).